The following is a 99-amino-acid chain: Large ribosomal subunit protein eL30 (99 aa).

Belongs to the eukaryotic ribosomal protein eL30 family.

The chain is Large ribosomal subunit protein eL30 from Methanobrevibacter smithii (strain ATCC 35061 / DSM 861 / OCM 144 / PS).